We begin with the raw amino-acid sequence, 199 residues long: Nucleoside triphosphate pyrophosphatase (199 aa).

The Proton acceptor role is filled by aspartate 76.

The protein belongs to the Maf family. It depends on a divalent metal cation as a cofactor.

Its subcellular location is the cytoplasm. It carries out the reaction a ribonucleoside 5'-triphosphate + H2O = a ribonucleoside 5'-phosphate + diphosphate + H(+). The enzyme catalyses a 2'-deoxyribonucleoside 5'-triphosphate + H2O = a 2'-deoxyribonucleoside 5'-phosphate + diphosphate + H(+). Its function is as follows. Nucleoside triphosphate pyrophosphatase. May have a dual role in cell division arrest and in preventing the incorporation of modified nucleotides into cellular nucleic acids. The sequence is that of Nucleoside triphosphate pyrophosphatase from Caulobacter vibrioides (strain ATCC 19089 / CIP 103742 / CB 15) (Caulobacter crescentus).